Reading from the N-terminus, the 360-residue chain is Carbamoyl phosphate synthase small chain (360 aa).

Positions 1 to 169 (MTKRLLILED…TKTAYPAPGI (169 aa)) are CPSase. Positions 46, 220, and 222 each coordinate L-glutamine. One can recognise a Glutamine amidotransferase type-1 domain in the interval 172–358 (NIVLVDFGLK…LEMIDSWRCT (187 aa)). Cys-247 functions as the Nucleophile in the catalytic mechanism. The L-glutamine site is built by Met-248, Gln-251, Asn-289, Gly-291, and Tyr-292. Residues His-331 and Asp-333 contribute to the active site.

It belongs to the CarA family. As to quaternary structure, composed of two chains; the small (or glutamine) chain promotes the hydrolysis of glutamine to ammonia, which is used by the large (or ammonia) chain to synthesize carbamoyl phosphate. Tetramer of heterodimers (alpha,beta)4.

It carries out the reaction hydrogencarbonate + L-glutamine + 2 ATP + H2O = carbamoyl phosphate + L-glutamate + 2 ADP + phosphate + 2 H(+). It catalyses the reaction L-glutamine + H2O = L-glutamate + NH4(+). The protein operates within amino-acid biosynthesis; L-arginine biosynthesis; carbamoyl phosphate from bicarbonate: step 1/1. It functions in the pathway pyrimidine metabolism; UMP biosynthesis via de novo pathway; (S)-dihydroorotate from bicarbonate: step 1/3. Functionally, small subunit of the glutamine-dependent carbamoyl phosphate synthetase (CPSase). CPSase catalyzes the formation of carbamoyl phosphate from the ammonia moiety of glutamine, carbonate, and phosphate donated by ATP, constituting the first step of 2 biosynthetic pathways, one leading to arginine and/or urea and the other to pyrimidine nucleotides. The small subunit (glutamine amidotransferase) binds and cleaves glutamine to supply the large subunit with the substrate ammonia. The polypeptide is Carbamoyl phosphate synthase small chain (Streptococcus pyogenes serotype M3 (strain SSI-1)).